The sequence spans 242 residues: Phosphoribosyl isomerase A (242 aa).

Aspartate 12 functions as the Proton acceptor in the catalytic mechanism. Aspartate 131 functions as the Proton donor in the catalytic mechanism.

This sequence belongs to the HisA/HisF family.

Its subcellular location is the cytoplasm. It carries out the reaction 1-(5-phospho-beta-D-ribosyl)-5-[(5-phospho-beta-D-ribosylamino)methylideneamino]imidazole-4-carboxamide = 5-[(5-phospho-1-deoxy-D-ribulos-1-ylimino)methylamino]-1-(5-phospho-beta-D-ribosyl)imidazole-4-carboxamide. The enzyme catalyses N-(5-phospho-beta-D-ribosyl)anthranilate = 1-(2-carboxyphenylamino)-1-deoxy-D-ribulose 5-phosphate. It participates in amino-acid biosynthesis; L-histidine biosynthesis; L-histidine from 5-phospho-alpha-D-ribose 1-diphosphate: step 4/9. Its pathway is amino-acid biosynthesis; L-tryptophan biosynthesis; L-tryptophan from chorismate: step 3/5. Functionally, involved in both the histidine and tryptophan biosynthetic pathways. The chain is Phosphoribosyl isomerase A from Streptomyces avermitilis (strain ATCC 31267 / DSM 46492 / JCM 5070 / NBRC 14893 / NCIMB 12804 / NRRL 8165 / MA-4680).